Reading from the N-terminus, the 183-residue chain is uncharacterized protein (183 aa).

4 helical membrane-spanning segments follow: residues 13–35 (KALL…LTYS), 60–82 (LLIL…KLRF), 117–139 (FEPV…YAIF), and 149–171 (LLFY…LYLS).

It localises to the cell membrane. This is an uncharacterized protein from Archaeoglobus fulgidus (strain ATCC 49558 / DSM 4304 / JCM 9628 / NBRC 100126 / VC-16).